Here is a 518-residue protein sequence, read N- to C-terminus: Arrestin-related trafficking adapter 10 (518 aa).

A Glycyl lysine isopeptide (Lys-Gly) (interchain with G-Cter in ubiquitin) cross-link involves residue K118.

Belongs to the ART10 family. In terms of assembly, interacts with RSP5. In terms of processing, ubiquitinated by RSP5.

It is found in the cytoplasm. May regulate endocytosis by recruiting RSP5 ubiquitin ligase activity to specific plasma membrane proteins in response to extracellular stimuli. This chain is Arrestin-related trafficking adapter 10 (ART10), found in Saccharomyces cerevisiae (strain Lalvin EC1118 / Prise de mousse) (Baker's yeast).